A 723-amino-acid polypeptide reads, in one-letter code: Nuclear hormone receptor HR96 (723 aa).

A DNA-binding region (nuclear receptor) is located at residues 4–79 (PKNCAVCGDK…IGMKSENIMS (76 aa)). 2 consecutive NR C4-type zinc fingers follow at residues 7-27 (CAVC…CESC) and 43-67 (CPFN…LRKC). The tract at residues 95 to 163 (AKRRLMENGT…QASSPGTQVN (69 aa)) is disordered. Composition is skewed to polar residues over residues 122–142 (DSSS…SCGS) and 151–163 (SGRQ…TQVN). The NR LBD domain maps to 483-723 (EQMKLRELRL…LREIFDLKNH (241 aa)).

It belongs to the nuclear hormone receptor family. NR1 subfamily.

Its subcellular location is the nucleus. Binds selectively to the HSP27 20E response element. This is Nuclear hormone receptor HR96 (Hr96) from Drosophila melanogaster (Fruit fly).